Here is a 315-residue protein sequence, read N- to C-terminus: Ornithine carbamoyltransferase (315 aa).

Residues 53 to 56 (STRT), Gln-80, Arg-104, and 131 to 134 (HPCQ) each bind carbamoyl phosphate. Residues Asn-163, Asp-227, and 231-232 (SM) each bind L-ornithine. Carbamoyl phosphate is bound by residues 267 to 268 (CL) and Arg-295.

The protein belongs to the aspartate/ornithine carbamoyltransferase superfamily. OTCase family.

It localises to the cytoplasm. The enzyme catalyses carbamoyl phosphate + L-ornithine = L-citrulline + phosphate + H(+). Its pathway is amino-acid degradation; L-arginine degradation via ADI pathway; carbamoyl phosphate from L-arginine: step 2/2. Functionally, reversibly catalyzes the transfer of the carbamoyl group from carbamoyl phosphate (CP) to the N(epsilon) atom of ornithine (ORN) to produce L-citrulline. The chain is Ornithine carbamoyltransferase from Rhodococcus opacus (strain B4).